The primary structure comprises 214 residues: Superoxide dismutase [Mn/Fe] (214 aa).

Fe(3+)-binding residues include His31, His79, Asp165, and His169. Mn(2+) contacts are provided by His31, His79, Asp165, and His169.

It belongs to the iron/manganese superoxide dismutase family. Mn(2+) serves as cofactor. It depends on Fe(3+) as a cofactor.

The enzyme catalyses 2 superoxide + 2 H(+) = H2O2 + O2. In terms of biological role, destroys superoxide anion radicals which are normally produced within the cells and which are toxic to biological systems. Catalyzes the dismutation of superoxide anion radicals into O2 and H2O2 by successive reduction and oxidation of the transition metal ion at the active site. The polypeptide is Superoxide dismutase [Mn/Fe] (sod) (Aeropyrum pernix (strain ATCC 700893 / DSM 11879 / JCM 9820 / NBRC 100138 / K1)).